Here is a 74-residue protein sequence, read N- to C-terminus: Large ribosomal subunit protein bL31 (74 aa).

Cysteine 16, cysteine 18, cysteine 38, and cysteine 41 together coordinate Zn(2+).

This sequence belongs to the bacterial ribosomal protein bL31 family. Type A subfamily. As to quaternary structure, part of the 50S ribosomal subunit. It depends on Zn(2+) as a cofactor.

Binds the 23S rRNA. This Salinispora tropica (strain ATCC BAA-916 / DSM 44818 / JCM 13857 / NBRC 105044 / CNB-440) protein is Large ribosomal subunit protein bL31.